We begin with the raw amino-acid sequence, 795 residues long: Protein espinas (795 aa).

A disordered region spans residues 30–96 (GTGLTFPPHR…FVSPLQRRHC (67 aa)). Residues 52 to 66 (ASMSSNVASTATSSN) show a composition bias toward low complexity. Positions 135 to 243 (LDFQRNSQSD…AVRLLSDERP (109 aa)) constitute a PET domain. LIM zinc-binding domains lie at 242-306 (RPCK…ETQK), 307-367 (PRCS…MFAE), and 368-430 (YCDY…GEPP). 2 disordered regions span residues 427 to 487 (GEPP…GSAG) and 616 to 684 (NRNT…EMQI). 2 stretches are compositionally biased toward basic and acidic residues: residues 459–471 (RSGD…ESSR) and 637–649 (LDNR…RFHS). The span at 650–662 (VQDTMSRSKSYTD) shows a compositional bias: polar residues. Residues 666 to 675 (ARRRRRRRNQ) show a composition bias toward basic residues.

This sequence belongs to the prickle / espinas / testin family.

This Drosophila pseudoobscura pseudoobscura (Fruit fly) protein is Protein espinas.